The following is a 131-amino-acid chain: uncharacterized protein (131 aa).

The CCHC-type; degenerate zinc-finger motif lies at 64–81 (VNCDKCGKPGNVKNDCPG).

This is an uncharacterized protein from Homo sapiens (Human).